Consider the following 364-residue polypeptide: Chorismate synthase (364 aa).

NADP(+)-binding residues include R48 and R54. FMN is bound by residues 125 to 127, 238 to 239, G278, 293 to 297, and R319; these read RSS, NA, and KPTSS.

The protein belongs to the chorismate synthase family. Homotetramer. The cofactor is FMNH2.

It carries out the reaction 5-O-(1-carboxyvinyl)-3-phosphoshikimate = chorismate + phosphate. The protein operates within metabolic intermediate biosynthesis; chorismate biosynthesis; chorismate from D-erythrose 4-phosphate and phosphoenolpyruvate: step 7/7. Functionally, catalyzes the anti-1,4-elimination of the C-3 phosphate and the C-6 proR hydrogen from 5-enolpyruvylshikimate-3-phosphate (EPSP) to yield chorismate, which is the branch point compound that serves as the starting substrate for the three terminal pathways of aromatic amino acid biosynthesis. This reaction introduces a second double bond into the aromatic ring system. This chain is Chorismate synthase, found in Shewanella frigidimarina (strain NCIMB 400).